A 414-amino-acid polypeptide reads, in one-letter code: MAVAPPSYCFVAFPPRAKDGLVVFGKNSARPRDEVQEVVYFSAADHEPESKVECTYISINQVPRTHAIVISRPAWLWGAEMGANEHGVCIANEAINAREPAAETEALLGMDLVRLGLERGATAKEALDVIVALLEEHGQGGNYYEDANSCHSFQSAFLIVDREEAWVLETVGKYWAAEKITEGVKCICNQLSLTTKIDAEHPELRSYAQSQGWWMGEDEFNFSEVFSPADDHLTCCSGRDTLEKQEESITVQTMIDVLRDKASGVCVDSESFLTTASVVSVLPQNGSSPCIHYFTGTPDPSRSIFKPFIFVDDVKLVPKAQSPCFGDDDPAKKEPRFQEKPDRRHELYKAHEWARAVLESDEEQGQKLRKTMLELEKQGLEAMEEILTSSDPLDPTEVGDLFYDCVDTEIKFFK.

Ala-2 is modified (N-acetylalanine). The active site involves Cys-9.

It belongs to the peptidase C69 family. Secernin subfamily.

It localises to the cytoplasm. Functionally, regulates exocytosis in mast cells. Increases both the extent of secretion and the sensitivity of mast cells to stimulation with calcium. The polypeptide is Secernin-1 (SCRN1) (Bos taurus (Bovine)).